Here is a 77-residue protein sequence, read N- to C-terminus: U11-lycotoxin-Ls1a (77 aa).

The signal sequence occupies residues 1 to 20 (MKLIILTGLVLFAIVSFIEA). The propeptide occupies 21 to 26 (EEETGR).

This sequence belongs to the neurotoxin 19 (CSTX) family. 10 (U11-Lctx) subfamily. Post-translationally, contains 4 disulfide bonds. In terms of tissue distribution, expressed by the venom gland.

Its subcellular location is the secreted. The polypeptide is U11-lycotoxin-Ls1a (Lycosa singoriensis (Wolf spider)).